The chain runs to 422 residues: Histidine--tRNA ligase (422 aa).

Belongs to the class-II aminoacyl-tRNA synthetase family. As to quaternary structure, homodimer.

It is found in the cytoplasm. It catalyses the reaction tRNA(His) + L-histidine + ATP = L-histidyl-tRNA(His) + AMP + diphosphate + H(+). This chain is Histidine--tRNA ligase (hisS), found in Photobacterium profundum (strain SS9).